The chain runs to 370 residues: Lysophosphatidic acid receptor 4 (370 aa).

The Extracellular segment spans residues 1-43 (MGDRRFIDFQFQDLNSSLRPRLGNATANNTCIVDDSFKYNLNG). N-linked (GlcNAc...) asparagine glycans are attached at residues N15, N24, and N28. A helical transmembrane segment spans residues 44-64 (AVYSVVFILGLITNSASLFVF). Residues 65 to 73 (CFRMKMRSE) lie on the Cytoplasmic side of the membrane. The chain crosses the membrane as a helical span at residues 74 to 94 (TAIFITNLALSDLLFVCTLPF). The Extracellular portion of the chain corresponds to 95 to 112 (KIFYNFNRHWPFGDTLCK). The cysteines at positions 111 and 188 are disulfide-linked. The chain crosses the membrane as a helical span at residues 113–133 (ISGTAFLTNIYGSMLFLTCIS). Residues 134 to 155 (VDRFLAIVYPFRSRTIRTRRNS) are Cytoplasmic-facing. A helical membrane pass occupies residues 156-176 (AIVCAGVWILVLSGGISASLF). Topologically, residues 177-203 (STTNVNNATTTCFEGFSKRVWKTYLSK) are extracellular. Residue N183 is glycosylated (N-linked (GlcNAc...) asparagine). A helical membrane pass occupies residues 204-224 (ITIFIEVVGFIIPLILNVSCS). Over 225-254 (SVVLRTLRKPATLSQIGTNKKKVLKMITVH) the chain is Cytoplasmic. A helical transmembrane segment spans residues 255 to 275 (MAVFVVCFVPYNSVLFLYALV). Over 276-294 (RSQAITNCLLERFAKIMYP) the chain is Extracellular. Residues 295–315 (ITLCLATLNCCFDPFIYYFTL) traverse the membrane as a helical segment. Over 316 to 370 (ESFQKSFYINTHIRMESLFKTETPLTPKPSLPAIQEEVSDQTTNNGGELMLESTF) the chain is Cytoplasmic.

It belongs to the G-protein coupled receptor 1 family.

Its subcellular location is the cell membrane. In terms of biological role, receptor for lysophosphatidic acid (LPA), a mediator of diverse cellular activities. Transduces a signal by increasing the intracellular calcium ions and by stimulating adenylyl cyclase activity. The rank order of potency for agonists of this receptor is 1-oleoyl- &gt; 1-stearoyl- &gt; 1-palmitoyl- &gt; 1-myristoyl- &gt; 1-alkyl- &gt; 1-alkenyl-LPA. This is Lysophosphatidic acid receptor 4 (Lpar4) from Mus musculus (Mouse).